The chain runs to 121 residues: U15-barytoxin-Tl1b (121 aa).

The first 16 residues, 1 to 16, serve as a signal peptide directing secretion; it reads MKLFMVLVASFAFAVA. 4 disulfide bridges follow: Cys54-Cys72, Cys65-Cys78, Cys69-Cys119, and Cys71-Cys90.

It belongs to the neurotoxin 03 (Tx2) family. 03 subfamily. Expressed by the venom gland.

It localises to the secreted. In terms of biological role, ion channel inhibitor. This chain is U15-barytoxin-Tl1b, found in Trittame loki (Brush-footed trapdoor spider).